The chain runs to 688 residues: Phosphoinositide 3-phosphatase (688 aa).

Residues 155 to 637 (SWDIYDPIKE…KKVQWWWQLY (483 aa)) enclose the Myotubularin phosphatase domain. Cys397 acts as the Phosphocysteine intermediate in catalysis. Residues 647–668 (ELRHKRDSVPISVDKKSKEHSN) show a composition bias toward basic and acidic residues. Residues 647 to 672 (ELRHKRDSVPISVDKKSKEHSNSDGG) form a disordered region.

Belongs to the protein-tyrosine phosphatase family. Non-receptor class myotubularin subfamily.

It is found in the cytoplasm. The enzyme catalyses a 1,2-diacyl-sn-glycero-3-phospho-(1D-myo-inositol-3-phosphate) + H2O = a 1,2-diacyl-sn-glycero-3-phospho-(1D-myo-inositol) + phosphate. Functionally, lipid phosphatase which dephosphorylates phosphatidylinositol 3-monophosphate (PI3P). Involved in the control of PI3P-dependent signaling and in the maintenance of endosomal system integrity. This is Phosphoinositide 3-phosphatase from Saccharomyces cerevisiae (strain ATCC 204508 / S288c) (Baker's yeast).